We begin with the raw amino-acid sequence, 350 residues long: Putative aminopeptidase MJ0555 (350 aa).

2 residues coordinate a divalent metal cation: His62 and Asp175. Catalysis depends on Glu207, which acts as the Proton acceptor. A divalent metal cation contacts are provided by Glu208, Asp230, and His321.

The protein belongs to the peptidase M42 family. A divalent metal cation serves as cofactor.

This Methanocaldococcus jannaschii (strain ATCC 43067 / DSM 2661 / JAL-1 / JCM 10045 / NBRC 100440) (Methanococcus jannaschii) protein is Putative aminopeptidase MJ0555.